Here is a 122-residue protein sequence, read N- to C-terminus: Large ribosomal subunit protein bL12 (122 aa).

Belongs to the bacterial ribosomal protein bL12 family. As to quaternary structure, homodimer. Part of the ribosomal stalk of the 50S ribosomal subunit. Forms a multimeric L10(L12)X complex, where L10 forms an elongated spine to which 2 to 4 L12 dimers bind in a sequential fashion. Binds GTP-bound translation factors.

Its function is as follows. Forms part of the ribosomal stalk which helps the ribosome interact with GTP-bound translation factors. Is thus essential for accurate translation. The polypeptide is Large ribosomal subunit protein bL12 (Staphylococcus aureus (strain Mu50 / ATCC 700699)).